Reading from the N-terminus, the 225-residue chain is Pathogenesis-related thaumatin-like protein 3.8 (225 aa).

A signal peptide spans 1 to 26; that stretch reads MAKVSDLALLLVAGMAISLYIQETGA. 8 cysteine pairs are disulfide-bonded: cysteine 35-cysteine 224, cysteine 76-cysteine 86, cysteine 91-cysteine 97, cysteine 139-cysteine 213, cysteine 144-cysteine 197, cysteine 152-cysteine 162, cysteine 166-cysteine 175, and cysteine 176-cysteine 184. N-linked (GlcNAc...) asparagine glycosylation occurs at asparagine 188.

Belongs to the thaumatin family.

May be involved in disease resistance. The protein is Pathogenesis-related thaumatin-like protein 3.8 of Cryptomeria japonica (Japanese cedar).